The sequence spans 833 residues: Piwi-like protein 2 (833 aa).

In terms of domain architecture, PAZ spans 227-353; the sequence is RINRVLNDNS…IPGELCFLCG (127 aa). The tract at residues 313-338 is disordered; it reads PMRRERKKKDEEGVEKEKEKEAPEEK. Over residues 320–338 the composition is skewed to basic and acidic residues; it reads KKDEEGVEKEKEKEAPEEK. One can recognise a Piwi domain in the interval 515–815; that stretch reads KMALVFVPDD…LAELVGKVHK (301 aa).

It belongs to the argonaute family. Piwi subfamily. In terms of tissue distribution, expressed in dividing adult stem cells.

Required for the production of functional progeny from adult somatic stem cells (neoblasts). The chain is Piwi-like protein 2 (wi-2) from Schmidtea mediterranea (Freshwater planarian flatworm).